The sequence spans 187 residues: GTP cyclohydrolase 1 1 (187 aa).

Belongs to the GTP cyclohydrolase I family. In terms of assembly, homomer.

It carries out the reaction GTP + H2O = 7,8-dihydroneopterin 3'-triphosphate + formate + H(+). The protein operates within cofactor biosynthesis; 7,8-dihydroneopterin triphosphate biosynthesis; 7,8-dihydroneopterin triphosphate from GTP: step 1/1. The chain is GTP cyclohydrolase 1 1 from Pseudomonas syringae pv. tomato (strain ATCC BAA-871 / DC3000).